We begin with the raw amino-acid sequence, 92 residues long: Small ribosomal subunit protein uS19c (92 aa).

Belongs to the universal ribosomal protein uS19 family.

It is found in the plastid. The protein resides in the chloroplast. Its function is as follows. Protein S19 forms a complex with S13 that binds strongly to the 16S ribosomal RNA. This chain is Small ribosomal subunit protein uS19c, found in Phalaenopsis aphrodite subsp. formosana (Moth orchid).